Reading from the N-terminus, the 337-residue chain is Viral cathepsin (337 aa).

An N-terminal signal peptide occupies residues 1-16 (MNKLLILFLLLNAALT). Positions 17-126 (RQDNHASANN…VVDGPAQRQR (110 aa)) are cleaved as a propeptide — activation peptide. Cystine bridges form between Cys-147/Cys-188, Cys-181/Cys-221, and Cys-276/Cys-324. Residue Cys-150 is part of the active site. Catalysis depends on residues His-283 and Asn-303.

This sequence belongs to the peptidase C1 family. Post-translationally, synthesized as an inactive proenzyme and activated by proteolytic removal of the inhibitory propeptide.

The enzyme catalyses Endopeptidase of broad specificity, hydrolyzing substrates of both cathepsin L and cathepsin B.. Functionally, cysteine protease that plays an essential role in host liquefaction to facilitate horizontal transmission of the virus. May participate in the degradation of foreign protein expressed by the baculovirus system. The polypeptide is Viral cathepsin (VCATH) (Lepidoptera (butterflies and moths)).